The sequence spans 985 residues: Cation channel sperm-associated auxiliary subunit epsilon (985 aa).

The first 35 residues, 1-35 (MPSAGQRKPGSLLALQALQKWLLRGGVGAMLARQV), serve as a signal peptide directing secretion. Residues 36–937 (VAALLLWLSC…ESLGMIPRSS (902 aa)) are Extracellular-facing. 4 cysteine pairs are disulfide-bonded: Cys87/Cys101, Cys130/Cys235, Cys275/Cys365, and Cys439/Cys442. N-linked (GlcNAc...) asparagine glycans are attached at residues Asn91, Asn143, and Asn292. Residues Asn502, Asn517, and Asn565 are each glycosylated (N-linked (GlcNAc...) asparagine). Cystine bridges form between Cys617/Cys724, Cys737/Cys919, Cys753/Cys786, and Cys838/Cys869. The N-linked (GlcNAc...) asparagine glycan is linked to Asn749. N-linked (GlcNAc...) asparagine glycosylation occurs at Asn830. N-linked (GlcNAc...) asparagine glycosylation is found at Asn888, Asn915, and Asn920. The helical transmembrane segment at 938 to 958 (VYLVAALIFVLMLTFISILVL) threads the bilayer. Topologically, residues 959–985 (SYFWYLKIYRQFIIEPLHKRPAKQKKN) are cytoplasmic.

Belongs to the CATSPERD family. Component of the CatSper complex or CatSpermasome composed of the core pore-forming members CATSPER1, CATSPER2, CATSPER3 and CATSPER4 as well as auxiliary members CATSPERB, CATSPERG2, CATSPERD, CATSPERE, CATSPERZ, C2CD6/CATSPERT, SLCO6C1, TMEM249, TMEM262 and EFCAB9. HSPA1 may be an additional auxiliary complex member. The core complex members CATSPER1, CATSPER2, CATSPER3 and CATSPER4 form a heterotetrameric channel. The auxiliary CATSPERB, CATSPERG2, CATSPERD and CATSPERE subunits form a pavilion-like structure over the pore which stabilizes the complex through interactions with CATSPER4, CATSPER3, CATSPER1 and CATSPER2 respectively. SLCO6C1 interacts with CATSPERE and TMEM262/CATSPERH interacts with CATSPERB, further stabilizing the complex. C2CD6/CATSPERT interacts at least with CATSPERD and is required for targeting the CatSper complex in the flagellar membrane. As to expression, testis-specific.

It localises to the cell projection. It is found in the cilium. Its subcellular location is the flagellum membrane. In terms of biological role, auxiliary component of the CatSper complex, a complex involved in sperm cell hyperactivation. Sperm cell hyperactivation is needed for sperm motility which is essential late in the preparation of sperm for fertilization. This Mus musculus (Mouse) protein is Cation channel sperm-associated auxiliary subunit epsilon.